The sequence spans 780 residues: TSC22 domain family protein 2 (780 aa).

5 disordered regions span residues 20–86, 126–158, 235–499, 587–607, and 736–780; these read AQVA…TVSP, TSAP…PTTC, AHGP…PGGP, LVGQ…PPLS, and LSSN…VSSA. The segment covering 28–37 has biased composition (acidic residues); the sequence is EDTESLDDPD. A compositionally biased stretch (low complexity) spans 126-146; the sequence is TSAPAPGAPGGPQLAGSSAGP. A compositionally biased stretch (polar residues) spans 241 to 262; it reads GTDSSLTAVSQLPPSEKMSQPT. Composition is skewed to low complexity over residues 297–316, 344–361, and 395–412; these read GAAT…QPQG, PAVG…AYPQ, and QPSS…ATLP. Polar residues predominate over residues 415–434; the sequence is TGQNASSVGAQLMGASSQPS. The segment covering 453-468 has biased composition (low complexity); that stretch reads QPTGVPPATVGGVVQP. Over residues 736–756 the composition is skewed to polar residues; sequence LSSNDQLSQLPTQQANPGSTS. Residues 765-774 show a composition bias toward pro residues; that stretch reads PPQPTQPPQQ.

Belongs to the TSC-22/Dip/Bun family. Interacts with NRBP1. Interacts with PKM isoform M2; the interaction results in reduced nuclear levels of PKM isoform M2, leading to repression of cyclin CCND1 transcription and reduced cell growth. Interacts with WDR77.

Functionally, reduces the level of nuclear PKM isoform M2 which results in repression of cyclin CCND1 transcription and reduced cell growth. The polypeptide is TSC22 domain family protein 2 (Homo sapiens (Human)).